The chain runs to 213 residues: Orotate phosphoribosyltransferase (213 aa).

Position 26 (Lys-26) interacts with 5-phospho-alpha-D-ribose 1-diphosphate. 34–35 (FF) contacts orotate. Residues 72–73 (YK), Arg-99, Lys-100, Lys-103, His-105, and 124–132 (DDVITAGTA) contribute to the 5-phospho-alpha-D-ribose 1-diphosphate site. Orotate-binding residues include Thr-128 and Arg-156.

This sequence belongs to the purine/pyrimidine phosphoribosyltransferase family. PyrE subfamily. In terms of assembly, homodimer. Mg(2+) serves as cofactor.

The catalysed reaction is orotidine 5'-phosphate + diphosphate = orotate + 5-phospho-alpha-D-ribose 1-diphosphate. It functions in the pathway pyrimidine metabolism; UMP biosynthesis via de novo pathway; UMP from orotate: step 1/2. In terms of biological role, catalyzes the transfer of a ribosyl phosphate group from 5-phosphoribose 1-diphosphate to orotate, leading to the formation of orotidine monophosphate (OMP). In Salmonella paratyphi A (strain ATCC 9150 / SARB42), this protein is Orotate phosphoribosyltransferase.